Consider the following 150-residue polypeptide: Developmental pluripotency-associated protein 3 (150 aa).

The segment covering 1–22 (MEEPSEKVDPMKDPETPQKKDE) has biased composition (basic and acidic residues). Residues 1–32 (MEEPSEKVDPMKDPETPQKKDEEDALDDTDVL) are disordered. Residues 1-75 (MEEPSEKVDP…VPVENKSEKI (75 aa)) are required for H3K9me2-binding. Positions 76 to 150 (RREVQSAFPK…PSENAKIGKN (75 aa)) are required to exclude TET3 from the maternal pronucleus.

As to expression, expressed in the immature oocytes and in newborn ovaries. Subsequently detected in maturing oocytes and in preimplantation embryos. Expressed in pluripotent embryonic but not in differentiated somatic cells. Expressed in blastocysts, epiblasts, primordial germ cells, embryonic gonads and primitive spermatogonia. No expression is detected in adult testes.

It localises to the nucleus. The protein localises to the cytoplasm. Its function is as follows. Primordial germ cell (PGCs)-specific protein involved in epigenetic chromatin reprogramming in the zygote following fertilization. In zygotes, DNA demethylation occurs selectively in the paternal pronucleus before the first cell division, while the adjacent maternal pronucleus and certain paternally-imprinted loci are protected from this process. Participates in protection of DNA methylation in the maternal pronucleus by preventing conversion of 5mC to 5hmC: specifically recognizes and binds histone H3 dimethylated at 'Lys-9' (H3K9me2) on maternal genome, and protects maternal genome from TET3-mediated conversion to 5hmC and subsequent DNA demethylation. Does not bind paternal chromatin, which is mainly packed into protamine and does not contain much H3K9me2 mark. Also protects imprinted loci that are marked with H3K9me2 in mature sperm from DNA demethylation in early embryogenesis. May be important for the totipotent/pluripotent states continuing through preimplantation development. Also involved in chromatin condensation in oocytogenesis. This Mus musculus (Mouse) protein is Developmental pluripotency-associated protein 3 (Dppa3).